Reading from the N-terminus, the 704-residue chain is Elongation factor G (704 aa).

The 277-residue stretch at 6-282 (NKVRNIGIMA…AVIDYLPTPL (277 aa)) folds into the tr-type G domain. GTP contacts are provided by residues 15–22 (AHIDAGKT), 79–83 (DTPGH), and 133–136 (NKMD).

The protein belongs to the TRAFAC class translation factor GTPase superfamily. Classic translation factor GTPase family. EF-G/EF-2 subfamily.

The protein localises to the cytoplasm. Functionally, catalyzes the GTP-dependent ribosomal translocation step during translation elongation. During this step, the ribosome changes from the pre-translocational (PRE) to the post-translocational (POST) state as the newly formed A-site-bound peptidyl-tRNA and P-site-bound deacylated tRNA move to the P and E sites, respectively. Catalyzes the coordinated movement of the two tRNA molecules, the mRNA and conformational changes in the ribosome. This chain is Elongation factor G, found in Corynebacterium diphtheriae (strain ATCC 700971 / NCTC 13129 / Biotype gravis).